The chain runs to 177 residues: MNASLAKRYAKALFDLAREQGTLDQVEAEVRLLDEVLHATPELMDLLTNPAVSDSELAQLLKDSFGDMTAIVVNTLLVMVENDRAAEVRALPRYVRELINDYRGIAEGIVTSAYPLSATDLKDVELVFGQKLGKTLQLKNVVDEEVIGGLRVQVGYTTYDDTIETKLTRLERELLNA.

It belongs to the ATPase delta chain family. In terms of assembly, F-type ATPases have 2 components, F(1) - the catalytic core - and F(0) - the membrane proton channel. F(1) has five subunits: alpha(3), beta(3), gamma(1), delta(1), epsilon(1). F(0) has three main subunits: a(1), b(2) and c(10-14). The alpha and beta chains form an alternating ring which encloses part of the gamma chain. F(1) is attached to F(0) by a central stalk formed by the gamma and epsilon chains, while a peripheral stalk is formed by the delta and b chains.

The protein resides in the cell membrane. Its function is as follows. F(1)F(0) ATP synthase produces ATP from ADP in the presence of a proton or sodium gradient. F-type ATPases consist of two structural domains, F(1) containing the extramembraneous catalytic core and F(0) containing the membrane proton channel, linked together by a central stalk and a peripheral stalk. During catalysis, ATP synthesis in the catalytic domain of F(1) is coupled via a rotary mechanism of the central stalk subunits to proton translocation. In terms of biological role, this protein is part of the stalk that links CF(0) to CF(1). It either transmits conformational changes from CF(0) to CF(1) or is implicated in proton conduction. The sequence is that of ATP synthase subunit delta from Exiguobacterium sp. (strain ATCC BAA-1283 / AT1b).